Reading from the N-terminus, the 228-residue chain is MKKFLLSSSVLSANFSRLGEDIFDVLKSGSDMIHYDVMDNHYVKNLTFGPIVLESLRSVEKIKSMVIDVHLMTCPVDDLIIKFAKLDVNIISFHPESTNNVEKTIKLIKSYGCKVGLALNPLTPLCVLDNVLDKIDLILLMSVNPGFPGQKFIPSILNKIRIVRELIDKSKKNILLEVDGGINLSNIFKIASFGTDIFVIGSAIFNSINYDLTIRSFRDVLKNINCKK.

Position 9 (serine 9) interacts with substrate. The a divalent metal cation site is built by histidine 34, aspartate 36, and histidine 70. Aspartate 36 functions as the Proton acceptor in the catalytic mechanism. Substrate contacts are provided by residues histidine 70, 146–149 (GFPG), 179–181 (DGG), and 201–202 (GS). Aspartate 179 is a binding site for a divalent metal cation. Catalysis depends on aspartate 179, which acts as the Proton donor.

This sequence belongs to the ribulose-phosphate 3-epimerase family. It depends on a divalent metal cation as a cofactor.

The enzyme catalyses D-ribulose 5-phosphate = D-xylulose 5-phosphate. The protein operates within carbohydrate degradation. Catalyzes the reversible epimerization of D-ribulose 5-phosphate to D-xylulose 5-phosphate. In Buchnera aphidicola subsp. Baizongia pistaciae (strain Bp), this protein is Ribulose-phosphate 3-epimerase.